A 291-amino-acid chain; its full sequence is Urease accessory protein UreD (291 aa).

This sequence belongs to the UreD family. As to quaternary structure, ureD, UreF and UreG form a complex that acts as a GTP-hydrolysis-dependent molecular chaperone, activating the urease apoprotein by helping to assemble the nickel containing metallocenter of UreC. The UreE protein probably delivers the nickel.

Its subcellular location is the cytoplasm. Required for maturation of urease via the functional incorporation of the urease nickel metallocenter. The protein is Urease accessory protein UreD of Polynucleobacter asymbioticus (strain DSM 18221 / CIP 109841 / QLW-P1DMWA-1) (Polynucleobacter necessarius subsp. asymbioticus).